The sequence spans 220 residues: GTP cyclohydrolase 1 (220 aa).

3 residues coordinate Zn(2+): cysteine 110, histidine 113, and cysteine 181.

The protein belongs to the GTP cyclohydrolase I family. Toroid-shaped homodecamer, composed of two pentamers of five dimers.

It catalyses the reaction GTP + H2O = 7,8-dihydroneopterin 3'-triphosphate + formate + H(+). The protein operates within cofactor biosynthesis; 7,8-dihydroneopterin triphosphate biosynthesis; 7,8-dihydroneopterin triphosphate from GTP: step 1/1. This chain is GTP cyclohydrolase 1, found in Baumannia cicadellinicola subsp. Homalodisca coagulata.